We begin with the raw amino-acid sequence, 250 residues long: Maleate isomerase (250 aa).

Residues asparagine 15, 80-82 (CLV), tyrosine 137, and asparagine 167 each bind substrate. Residue cysteine 80 is the Nucleophile of the active site. Cysteine 80 is subject to S-(2-succinyl)cysteine. Catalysis depends on cysteine 198, which acts as the Proton donor. Position 199-200 (199-200 (VQ)) interacts with substrate.

The protein belongs to the maleate isomerase family. Homodimer.

The catalysed reaction is maleate = fumarate. It participates in cofactor degradation; nicotinate degradation. Its function is as follows. Catalyzes cis-trans isomerization of the C2-C3 double bond in maleate to yield fumarate in the aerobic nicotinate degradation pathway. In Pseudomonas putida (strain ATCC 47054 / DSM 6125 / CFBP 8728 / NCIMB 11950 / KT2440), this protein is Maleate isomerase.